The following is a 314-amino-acid chain: MSEIEQTGQSNHYPVMLSESVAGLNIDPNGIYIDCTFGRGGHSRAILNELGEQGRLLAIDQDPEAIRYADANFDDPRFEIQHGSFEALQQYCEARDWVGKIDGILIDLGVSSPQLDEAERGFSFMRSGPLDMRMNPQTGLSAKEWLTQVDEKTLAQVLKQYGEERFSGRIARHIKEAVQEQKLQTTLDLAQVVTKASPKTEKHKHPATRTFQAIRIAVNRELDVLKTVLEVSVAVLKTGGRLSVISFHSLEDRIVKQFIRDQSRIKDLFPDSPIQLEVVEPVIKKVGKPVFPSKEECQENPRSRSAVLRIAERI.

S-adenosyl-L-methionine is bound by residues 40–42 (GGH), D60, F85, D107, and Q114.

It belongs to the methyltransferase superfamily. RsmH family.

The protein localises to the cytoplasm. It catalyses the reaction cytidine(1402) in 16S rRNA + S-adenosyl-L-methionine = N(4)-methylcytidine(1402) in 16S rRNA + S-adenosyl-L-homocysteine + H(+). Functionally, specifically methylates the N4 position of cytidine in position 1402 (C1402) of 16S rRNA. In Hydrogenovibrio crunogenus (strain DSM 25203 / XCL-2) (Thiomicrospira crunogena), this protein is Ribosomal RNA small subunit methyltransferase H.